The following is a 121-amino-acid chain: Large ribosomal subunit protein bL12 (121 aa).

Belongs to the bacterial ribosomal protein bL12 family. In terms of assembly, homodimer. Part of the ribosomal stalk of the 50S ribosomal subunit. Forms a multimeric L10(L12)X complex, where L10 forms an elongated spine to which 2 to 4 L12 dimers bind in a sequential fashion. Binds GTP-bound translation factors.

In terms of biological role, forms part of the ribosomal stalk which helps the ribosome interact with GTP-bound translation factors. Is thus essential for accurate translation. The protein is Large ribosomal subunit protein bL12 of Leuconostoc citreum (strain KM20).